The following is a 203-amino-acid chain: ATP-dependent Clp protease proteolytic subunit (203 aa).

The active-site Nucleophile is the Ser107. His132 is a catalytic residue.

Belongs to the peptidase S14 family. As to quaternary structure, fourteen ClpP subunits assemble into 2 heptameric rings which stack back to back to give a disk-like structure with a central cavity, resembling the structure of eukaryotic proteasomes.

It localises to the cytoplasm. The enzyme catalyses Hydrolysis of proteins to small peptides in the presence of ATP and magnesium. alpha-casein is the usual test substrate. In the absence of ATP, only oligopeptides shorter than five residues are hydrolyzed (such as succinyl-Leu-Tyr-|-NHMec, and Leu-Tyr-Leu-|-Tyr-Trp, in which cleavage of the -Tyr-|-Leu- and -Tyr-|-Trp bonds also occurs).. Functionally, cleaves peptides in various proteins in a process that requires ATP hydrolysis. Has a chymotrypsin-like activity. Plays a major role in the degradation of misfolded proteins. In Shewanella frigidimarina (strain NCIMB 400), this protein is ATP-dependent Clp protease proteolytic subunit.